The chain runs to 584 residues: Complement component C8 alpha chain (584 aa).

The first 20 residues, 1–20, serve as a signal peptide directing secretion; that stretch reads MFAVVFFILSLMTCQPGVTA. Residues 21–30 constitute a propeptide that is removed on maturation; that stretch reads QEKVNQRVRR. One can recognise a TSP type-1 1 domain in the interval 38–91; the sequence is TCQLSNWSEWTDCFPCQDKKYRHRSLLQPNKFGGTICSGDIWDQASCSSSTTCV. 7 disulfide bridges follow: cysteine 39/cysteine 74, cysteine 50/cysteine 84, cysteine 53/cysteine 90, cysteine 96/cysteine 108, cysteine 102/cysteine 121, cysteine 115/cysteine 130, and cysteine 140/cysteine 177. Tryptophan 44 is a glycosylation site (C-linked (Man) tryptophan). Positions 94 to 132 constitute an LDL-receptor class A domain; it reads AQCGQDFQCKETGRCLKRHLVCNGDQDCLDGSDEDDCED. Ca(2+)-binding residues include leucine 113, asparagine 116, aspartate 118, aspartate 120, aspartate 126, and glutamate 127. The region spanning 135–498 is the MACPF domain; it reads AIDEDCSQYE…QYLMEFNACR (364 aa). A run of 4 beta stranded transmembrane segments spans residues 248-256, 259-266, 377-384, and 390-395; these read FGVTIGIGP, SPLLVGVG, GGSLGIQY, and VGGGLS. Residues cysteine 375 and cysteine 399 are joined by a disulfide bond. N-linked (GlcNAc...) asparagine glycosylation occurs at asparagine 437. 4 disulfides stabilise this stretch: cysteine 497/cysteine 544, cysteine 499/cysteine 515, cysteine 502/cysteine 517, and cysteine 519/cysteine 528. Residues 499–529 form the EGF-like domain; it reads CGPCFNNGVPILEGTSCRCQCRLGSLGAACE. Positions 539–583 constitute a TSP type-1 2 domain; that stretch reads DGSWSCWSSWSVCRAGIQERRRECDNPAPQNGGASCPGRKVQTQA. 3 C-linked (Man) tryptophan glycosylation sites follow: tryptophan 542, tryptophan 545, and tryptophan 548. Cystine bridges form between cysteine 551–cysteine 584 and cysteine 562–cysteine 574. Residues 562-584 form a disordered region; that stretch reads CDNPAPQNGGASCPGRKVQTQAC.

It belongs to the complement C6/C7/C8/C9 family. In terms of assembly, heterotrimer of 3 chains: alpha (C8A), beta (C8B) and gamma (C8G); the alpha and gamma chains are disulfide bonded. Component of the membrane attack complex (MAC), composed of complement C5b, C6, C7, C8A, C8B, C8G and multiple copies of the pore-forming subunit C9.

It is found in the secreted. The protein resides in the target cell membrane. With respect to regulation, membrane attack complex (MAC) assembly is inhibited by CD59, thereby protecting self-cells from damage during complement activation. CD59 acts by binding to the beta-haipins of C8 (C8A and C8B), forming an intermolecular beta-sheet that prevents incorporation of the multiple copies of C9 required for complete formation of the osmolytic pore. MAC assembly is also inhibited by clusterin (CLU) chaperones that inhibit polymerization of C9. Component of the membrane attack complex (MAC), a multiprotein complex activated by the complement cascade, which inserts into a target cell membrane and forms a pore, leading to target cell membrane rupture and cell lysis. The MAC is initiated by proteolytic cleavage of C5 into complement C5b in response to the classical, alternative, lectin and GZMK complement pathways. The complement pathways consist in a cascade of proteins that leads to phagocytosis and breakdown of pathogens and signaling that strengthens the adaptive immune system. C8A, together with C8B and C8G, inserts into the target membrane, but does not form pores by itself. During MAC assembly, associates with C5b, C6 and C7 to form the C5b8 intermediate complex that inserts into the target membrane and traverses the bilayer increasing membrane rigidity. This chain is Complement component C8 alpha chain, found in Homo sapiens (Human).